We begin with the raw amino-acid sequence, 462 residues long: Chromosomal replication initiator protein DnaA (462 aa).

The segment at 1–86 (MSLSLWQQCL…EVGNKPVSQN (86 aa)) is domain I, interacts with DnaA modulators. A domain II region spans residues 86 to 125 (NDSPPQRVVTHTPVAPAPQNTSVRPSWDNTAVQPELSYRS). Residues 126 to 342 (NVNPKHTFDN…GALNRVIANA (217 aa)) are domain III, AAA+ region. Residues G170, G172, K173, and T174 each contribute to the ATP site. A domain IV, binds dsDNA region spans residues 343–462 (NFTGRAITID…FSNLIRTLSS (120 aa)).

It belongs to the DnaA family. As to quaternary structure, oligomerizes as a right-handed, spiral filament on DNA at oriC.

It localises to the cytoplasm. Functionally, plays an essential role in the initiation and regulation of chromosomal replication. ATP-DnaA binds to the origin of replication (oriC) to initiate formation of the DNA replication initiation complex once per cell cycle. Binds the DnaA box (a 9 base pair repeat at the origin) and separates the double-stranded (ds)DNA. Forms a right-handed helical filament on oriC DNA; dsDNA binds to the exterior of the filament while single-stranded (ss)DNA is stabiized in the filament's interior. The ATP-DnaA-oriC complex binds and stabilizes one strand of the AT-rich DNA unwinding element (DUE), permitting loading of DNA polymerase. After initiation quickly degrades to an ADP-DnaA complex that is not apt for DNA replication. Binds acidic phospholipids. This Photorhabdus laumondii subsp. laumondii (strain DSM 15139 / CIP 105565 / TT01) (Photorhabdus luminescens subsp. laumondii) protein is Chromosomal replication initiator protein DnaA.